Here is a 234-residue protein sequence, read N- to C-terminus: Leucyl/phenylalanyl-tRNA--protein transferase (234 aa).

The protein belongs to the L/F-transferase family.

Its subcellular location is the cytoplasm. The catalysed reaction is N-terminal L-lysyl-[protein] + L-leucyl-tRNA(Leu) = N-terminal L-leucyl-L-lysyl-[protein] + tRNA(Leu) + H(+). It catalyses the reaction N-terminal L-arginyl-[protein] + L-leucyl-tRNA(Leu) = N-terminal L-leucyl-L-arginyl-[protein] + tRNA(Leu) + H(+). The enzyme catalyses L-phenylalanyl-tRNA(Phe) + an N-terminal L-alpha-aminoacyl-[protein] = an N-terminal L-phenylalanyl-L-alpha-aminoacyl-[protein] + tRNA(Phe). In terms of biological role, functions in the N-end rule pathway of protein degradation where it conjugates Leu, Phe and, less efficiently, Met from aminoacyl-tRNAs to the N-termini of proteins containing an N-terminal arginine or lysine. This Escherichia coli O45:K1 (strain S88 / ExPEC) protein is Leucyl/phenylalanyl-tRNA--protein transferase.